A 716-amino-acid chain; its full sequence is MQLERAAFSDPFSFLGPQYQSKGIALRVWMPGAVSMVVEIENGEKFPLTREDESGFVLISKMDLTAAVYKLHISWPTGEQTIHDPYQFHGFMPSGDALVSPSKMHSEMGAQLISLNKGGQPISGVRFLTYAPNASAVSVIGEFNAWDGRRHPMQRLDDGLWGLFIPDLEDGTQYKFELKDSSGNSLPHKADPWGYSSEQYPSFTSIVYDQSRYQWQDKAWQTRPVSVKHQEALSFYELHAGSWRRNEQGDFLTYRELAEQLIPYLSEMGYTHLELMPVSEHPFYGSWGYQPIGLFSPTSRFGTPDDFKYFVDQCHLAGIGVVLDWVPAHFPSDDHGLANFDGTALFNDPDPRRGWHQDWKSYIYDYGRDHVRRFLISNALFWLEHYHIDGLRVDAVASMLYLDYSREHDQWIPNHDGGNQNYDAISLLRWMNEEVYSHYPNAMTIAEESTAFSGVSRPTDMGGLGFGFKWNMGWMHDSLSYIQEEPVHRKFHHNTITFPLIYAFSENYVLSLSHDEVVYGKGSLLDKMPGDEWQKSANLRTYMGYMYGQPGKKLNFMGAEIAQSAEWSHDGQLEWHWLEYPRHNGMKKLVSDLNHLYQDLPALHELDCSPEGFEWRVQDDAETSVLAHERFALNGDKVLVVSNFTPVPREGYTLGVPAEGEYEVLLNTDAEKYWGSGTPIQQTVKTQLLEKHGLAQSISLDLPPLSTVFLAFKQHA.

Asp394 functions as the Nucleophile in the catalytic mechanism. Glu447 functions as the Proton donor in the catalytic mechanism.

This sequence belongs to the glycosyl hydrolase 13 family. GlgB subfamily. Monomer.

The catalysed reaction is Transfers a segment of a (1-&gt;4)-alpha-D-glucan chain to a primary hydroxy group in a similar glucan chain.. It functions in the pathway glycan biosynthesis; glycogen biosynthesis. Functionally, catalyzes the formation of the alpha-1,6-glucosidic linkages in glycogen by scission of a 1,4-alpha-linked oligosaccharide from growing alpha-1,4-glucan chains and the subsequent attachment of the oligosaccharide to the alpha-1,6 position. The protein is 1,4-alpha-glucan branching enzyme GlgB of Photobacterium profundum (strain SS9).